Reading from the N-terminus, the 164-residue chain is Putative L,D-transpeptidase YkuD (164 aa).

The 44-residue stretch at 2–45 (LTYQVKQGDTLNSIAADFRISTAALLQANPSLQAGLTAGQSIVI) folds into the LysM domain. Residues 56-163 (YHIAVSIGAK…VPNGTRVTIN (108 aa)) enclose the L,D-TPase catalytic domain. Catalysis depends on histidine 123, which acts as the Proton donor/acceptor. Residue cysteine 139 is the Nucleophile of the active site.

This sequence belongs to the YkuD family. In terms of assembly, monomer.

It is found in the spore wall. The protein operates within cell wall biogenesis; peptidoglycan biosynthesis. Its function is as follows. Probable enzyme that may play an important role in cell wall biology. The protein is Putative L,D-transpeptidase YkuD (ykuD) of Bacillus subtilis (strain 168).